The following is a 191-amino-acid chain: Small ribosomal subunit protein bS6 (191 aa).

Positions 168–191 (KVNLTRKPTPNKSSENKQKVEKQA) are disordered. Residues 181-191 (SENKQKVEKQA) are compositionally biased toward basic and acidic residues.

This sequence belongs to the bacterial ribosomal protein bS6 family.

Its function is as follows. Binds together with bS18 to 16S ribosomal RNA. In Mycoplasmoides gallisepticum (strain R(low / passage 15 / clone 2)) (Mycoplasma gallisepticum), this protein is Small ribosomal subunit protein bS6.